Consider the following 58-residue polypeptide: Sperm protamine P1 (58 aa).

Positions 1-58 (MARYRRRSRSRSRSRYGRRRRRSRSRRRRSRRRRRRRGRRGRGYHRRSPHRRRRRRRR) are disordered.

The protein belongs to the protamine P1 family. Testis.

It localises to the nucleus. Its subcellular location is the chromosome. Functionally, protamines substitute for histones in the chromatin of sperm during the haploid phase of spermatogenesis. They compact sperm DNA into a highly condensed, stable and inactive complex. This is Sperm protamine P1 (PRM1) from Monodelphis domestica (Gray short-tailed opossum).